Here is a 557-residue protein sequence, read N- to C-terminus: 2-succinyl-5-enolpyruvyl-6-hydroxy-3-cyclohexene-1-carboxylate synthase (557 aa).

The protein belongs to the TPP enzyme family. MenD subfamily. As to quaternary structure, homodimer. The cofactor is Mg(2+). It depends on Mn(2+) as a cofactor. Thiamine diphosphate is required as a cofactor.

The enzyme catalyses isochorismate + 2-oxoglutarate + H(+) = 5-enolpyruvoyl-6-hydroxy-2-succinyl-cyclohex-3-ene-1-carboxylate + CO2. It participates in quinol/quinone metabolism; 1,4-dihydroxy-2-naphthoate biosynthesis; 1,4-dihydroxy-2-naphthoate from chorismate: step 2/7. Its pathway is quinol/quinone metabolism; menaquinone biosynthesis. Catalyzes the thiamine diphosphate-dependent decarboxylation of 2-oxoglutarate and the subsequent addition of the resulting succinic semialdehyde-thiamine pyrophosphate anion to isochorismate to yield 2-succinyl-5-enolpyruvyl-6-hydroxy-3-cyclohexene-1-carboxylate (SEPHCHC). The sequence is that of 2-succinyl-5-enolpyruvyl-6-hydroxy-3-cyclohexene-1-carboxylate synthase from Staphylococcus aureus (strain USA300).